The primary structure comprises 189 residues: Probable nicotinate-nucleotide adenylyltransferase (189 aa).

Belongs to the NadD family.

It carries out the reaction nicotinate beta-D-ribonucleotide + ATP + H(+) = deamido-NAD(+) + diphosphate. The protein operates within cofactor biosynthesis; NAD(+) biosynthesis; deamido-NAD(+) from nicotinate D-ribonucleotide: step 1/1. Catalyzes the reversible adenylation of nicotinate mononucleotide (NaMN) to nicotinic acid adenine dinucleotide (NaAD). The sequence is that of Probable nicotinate-nucleotide adenylyltransferase from Bacillus cereus (strain AH187).